The chain runs to 322 residues: uncharacterized protein (322 aa).

A helical transmembrane segment spans residues 212-234; sequence VCALLVGAISVATAGAAFSIIIV.

The protein localises to the membrane. This is an uncharacterized protein from Rickettsia prowazekii (strain Madrid E).